A 480-amino-acid chain; its full sequence is ATP synthase subunit beta 1 (480 aa).

Residue 154-161 (GGAGVGKT) participates in ATP binding.

The protein belongs to the ATPase alpha/beta chains family. In terms of assembly, F-type ATPases have 2 components, CF(1) - the catalytic core - and CF(0) - the membrane proton channel. CF(1) has five subunits: alpha(3), beta(3), gamma(1), delta(1), epsilon(1). CF(0) has four main subunits: a(1), b(1), b'(1) and c(9-12).

Its subcellular location is the cell inner membrane. The catalysed reaction is ATP + H2O + 4 H(+)(in) = ADP + phosphate + 5 H(+)(out). Produces ATP from ADP in the presence of a proton gradient across the membrane. The catalytic sites are hosted primarily by the beta subunits. The sequence is that of ATP synthase subunit beta 1 from Bradyrhizobium sp. (strain BTAi1 / ATCC BAA-1182).